Reading from the N-terminus, the 343-residue chain is Fructose-1,6-bisphosphatase class 1 (343 aa).

Positions 90, 109, 111, and 112 each coordinate Mg(2+). Substrate contacts are provided by residues 112 to 115 (DGSS) and asparagine 199. Glutamate 271 provides a ligand contact to Mg(2+).

This sequence belongs to the FBPase class 1 family. Homotetramer. Mg(2+) is required as a cofactor.

It localises to the cytoplasm. It catalyses the reaction beta-D-fructose 1,6-bisphosphate + H2O = beta-D-fructose 6-phosphate + phosphate. It functions in the pathway carbohydrate biosynthesis; Calvin cycle. The sequence is that of Fructose-1,6-bisphosphatase class 1 from Rhodopseudomonas palustris (strain HaA2).